A 998-amino-acid chain; its full sequence is Antigenic heat-stable 120 kDa protein (998 aa).

The disordered stretch occupies residues 1–69 (GGFMSQDHTG…LSGTISTDDQ (69 aa)). Residues 12 to 21 (ENDEGYESDI) are compositionally biased toward acidic residues. Polar residues predominate over residues 46–68 (TPASSTQSTPAISTLSGTISTDD).

The protein localises to the cytoplasm. This chain is Antigenic heat-stable 120 kDa protein (sca4), found in Rickettsia akari.